An 857-amino-acid chain; its full sequence is Leucine--tRNA ligase (857 aa).

The short motif at 42 to 52 (PYPSGKLHMGH) is the 'HIGH' region element. Positions 620 to 624 (KMSKS) match the 'KMSKS' region motif. An ATP-binding site is contributed by Lys623.

Belongs to the class-I aminoacyl-tRNA synthetase family.

It is found in the cytoplasm. The catalysed reaction is tRNA(Leu) + L-leucine + ATP = L-leucyl-tRNA(Leu) + AMP + diphosphate. The protein is Leucine--tRNA ligase of Thiobacillus denitrificans (strain ATCC 25259 / T1).